A 497-amino-acid polypeptide reads, in one-letter code: Sperm motility kinase Z (497 aa).

In terms of domain architecture, Protein kinase spans 28 to 275; that stretch reads YTVLKTLSQH…AQDLLSHPWL (248 aa). ATP is bound by residues 34–42 and K57; that span reads LSQHGTTEV. The active-site Proton acceptor is D146. One can recognise a UBA domain in the interval 292-332; it reads FPDPDIMAAMKNIGFHVQDIRESLKHRKFDETMATYNLLRA. Disordered stretches follow at residues 383-410 and 439-460; these read TEEH…GRSQ and SSQA…SCPL.

It belongs to the protein kinase superfamily. CAMK Ser/Thr protein kinase family. Smok subfamily.

The enzyme catalyses L-seryl-[protein] + ATP = O-phospho-L-seryl-[protein] + ADP + H(+). It catalyses the reaction L-threonyl-[protein] + ATP = O-phospho-L-threonyl-[protein] + ADP + H(+). Functionally, may play a role in sperm motility, especially in the regulation of flagellar function. The sequence is that of Sperm motility kinase Z (Gm4922) from Mus musculus (Mouse).